Here is a 419-residue protein sequence, read N- to C-terminus: Synaptotagmin-1 (419 aa).

Over 1 to 58 (MVSESHHEALAAPPVTTVATVLPSNATEPASPGEGKEDAFSKLKEKFMNELHKIPLPP) the chain is Vesicular. Asparagine 25 is a glycosylation site (N-linked (GlcNAc...) asparagine). The chain crosses the membrane as a helical span at residues 59–80 (WALIAIAIVAVLLVLTCCFCIC). S-palmitoyl cysteine attachment occurs at residues cysteine 75, cysteine 76, cysteine 78, cysteine 80, and cysteine 83. Residues 81-419 (KKCLFKKKNK…EVDAMLAVKK (339 aa)) lie on the Cytoplasmic side of the membrane. The segment at 108-139 (KDLGKTMKDQDDDAETGLTDGEEKEEPKEEEK) is disordered. Residues 117 to 131 (QDDDAETGLTDGEEK) are compositionally biased toward acidic residues. Threonine 126 is modified (phosphothreonine). The interval 133–379 (EPKEEEKLGK…AIGKVFVGYN (247 aa)) is phospholipid binding. In terms of domain architecture, C2 1 spans 139–258 (KLGKLQYSLD…DFGHVTEEWR (120 aa)). Ca(2+)-binding residues include leucine 169, aspartate 170, and aspartate 176. Tyrosine 227 carries the post-translational modification Phosphotyrosine. Aspartate 228, phenylalanine 229, aspartate 230, serine 233, lysine 234, and aspartate 236 together coordinate Ca(2+). Serine 262 is subject to Phosphoserine. Positions 270–403 (KLGDICFSLR…NPRRPIAQWH (134 aa)) constitute a C2 2 domain. 2 residues coordinate Ca(2+): aspartate 301 and aspartate 307. Phosphoserine is present on residues serine 340 and serine 342. 3 residues coordinate Ca(2+): aspartate 361, aspartate 363, and aspartate 369.

The protein belongs to the synaptotagmin family. Homotetramer. Heterodimer; heterodimerizes with SYT2 in presence of calcium. Interacts with SCAMP5. Interacts with STON2. Forms a complex with SV2B, syntaxin 1 and SNAP25. Interacts with SV2A, SV2B and SV2C. Interacts with RIMS1. Interacts with PRRT2. Interacts with DNAJC5 in a phosphorylation-dependent manner. Interacts (via N-terminus) with RAB3A. Interacts with SYT12. Interacts with calmodulin. Interacts with DNM1 (via C-terminal proline-rich domain (PRD)); this interaction facilitates vesicle fission during clathrin-mediated endocytosis (CME). The cofactor is Ca(2+). Post-translationally, glycosylated.

It localises to the cytoplasmic vesicle. Its subcellular location is the secretory vesicle membrane. The protein resides in the secretory vesicle. It is found in the synaptic vesicle membrane. The protein localises to the chromaffin granule membrane. It localises to the cytoplasm. Calcium sensor that participates in triggering neurotransmitter release at the synapse. May have a regulatory role in the membrane interactions during trafficking of synaptic vesicles at the active zone of the synapse. It binds acidic phospholipids with a specificity that requires the presence of both an acidic head group and a diacyl backbone. A Ca(2+)-dependent interaction between synaptotagmin and putative receptors for activated protein kinase C has also been reported. It can bind to at least three additional proteins in a Ca(2+)-independent manner; these are neurexins, syntaxin and AP2. Plays a role in dendrite formation by melanocytes. The sequence is that of Synaptotagmin-1 from Pongo abelii (Sumatran orangutan).